Reading from the N-terminus, the 114-residue chain is MAGLKDVVTREYTINLHKRLHGVTFKKRAPRAVKEIKKFAKLHMGTEDVRLDPRLNTEIWKRGVKGVPFRMRLRISRRRNEEDNAKNPLFSYVEPVVVASAKGLHTVVVEEEEA.

This sequence belongs to the eukaryotic ribosomal protein eL31 family.

The chain is Large ribosomal subunit protein eL31 (RPL31) from Eremothecium gossypii (strain ATCC 10895 / CBS 109.51 / FGSC 9923 / NRRL Y-1056) (Yeast).